The following is a 157-amino-acid chain: Crossover junction endodeoxyribonuclease RuvC (157 aa).

Catalysis depends on residues D7, E67, and D139. Mg(2+) contacts are provided by D7, E67, and D139.

The protein belongs to the RuvC family. Homodimer which binds Holliday junction (HJ) DNA. The HJ becomes 2-fold symmetrical on binding to RuvC with unstacked arms; it has a different conformation from HJ DNA in complex with RuvA. In the full resolvosome a probable DNA-RuvA(4)-RuvB(12)-RuvC(2) complex forms which resolves the HJ. Mg(2+) serves as cofactor.

The protein localises to the cytoplasm. It catalyses the reaction Endonucleolytic cleavage at a junction such as a reciprocal single-stranded crossover between two homologous DNA duplexes (Holliday junction).. Its function is as follows. The RuvA-RuvB-RuvC complex processes Holliday junction (HJ) DNA during genetic recombination and DNA repair. Endonuclease that resolves HJ intermediates. Cleaves cruciform DNA by making single-stranded nicks across the HJ at symmetrical positions within the homologous arms, yielding a 5'-phosphate and a 3'-hydroxyl group; requires a central core of homology in the junction. The consensus cleavage sequence is 5'-(A/T)TT(C/G)-3'. Cleavage occurs on the 3'-side of the TT dinucleotide at the point of strand exchange. HJ branch migration catalyzed by RuvA-RuvB allows RuvC to scan DNA until it finds its consensus sequence, where it cleaves and resolves the cruciform DNA. In Prochlorococcus marinus (strain MIT 9301), this protein is Crossover junction endodeoxyribonuclease RuvC.